The primary structure comprises 297 residues: 4-hydroxy-tetrahydrodipicolinate synthase (297 aa).

T47 is a binding site for pyruvate. The Proton donor/acceptor role is filled by Y136. The active-site Schiff-base intermediate with substrate is the K165. I206 contributes to the pyruvate binding site.

Belongs to the DapA family. In terms of assembly, homotetramer; dimer of dimers.

The protein resides in the cytoplasm. The enzyme catalyses L-aspartate 4-semialdehyde + pyruvate = (2S,4S)-4-hydroxy-2,3,4,5-tetrahydrodipicolinate + H2O + H(+). It participates in amino-acid biosynthesis; L-lysine biosynthesis via DAP pathway; (S)-tetrahydrodipicolinate from L-aspartate: step 3/4. Catalyzes the condensation of (S)-aspartate-beta-semialdehyde [(S)-ASA] and pyruvate to 4-hydroxy-tetrahydrodipicolinate (HTPA). The polypeptide is 4-hydroxy-tetrahydrodipicolinate synthase (Campylobacter fetus subsp. fetus (strain 82-40)).